Consider the following 213-residue polypeptide: Glycerol-3-phosphate acyltransferase (213 aa).

6 helical membrane-spanning segments follow: residues 2 to 22, 52 to 74, 81 to 100, 112 to 132, 143 to 163, and 164 to 184; these read ITIV…GLWI, AGMA…PIIF, PLIF…FAGF, VIFG…FGAL, VTAS…GFIL, and SNYD…IIIR.

Belongs to the PlsY family. As to quaternary structure, probably interacts with PlsX.

It localises to the cell membrane. It carries out the reaction an acyl phosphate + sn-glycerol 3-phosphate = a 1-acyl-sn-glycero-3-phosphate + phosphate. Its pathway is lipid metabolism; phospholipid metabolism. Catalyzes the transfer of an acyl group from acyl-phosphate (acyl-PO(4)) to glycerol-3-phosphate (G3P) to form lysophosphatidic acid (LPA). This enzyme utilizes acyl-phosphate as fatty acyl donor, but not acyl-CoA or acyl-ACP. This chain is Glycerol-3-phosphate acyltransferase, found in Streptococcus pneumoniae (strain ATCC 700669 / Spain 23F-1).